The chain runs to 348 residues: DnaJ homolog subfamily B member 5 (348 aa).

The 65-residue stretch at 4 to 68 (DYYKILGIPS…KKRGLYDQYG (65 aa)) folds into the J domain.

This chain is DnaJ homolog subfamily B member 5 (DNAJB5), found in Homo sapiens (Human).